The chain runs to 877 residues: Alanine--tRNA ligase (877 aa).

Zn(2+) is bound by residues His-561, His-565, Cys-669, and His-673.

The protein belongs to the class-II aminoacyl-tRNA synthetase family. The cofactor is Zn(2+).

The protein localises to the cytoplasm. The catalysed reaction is tRNA(Ala) + L-alanine + ATP = L-alanyl-tRNA(Ala) + AMP + diphosphate. Its function is as follows. Catalyzes the attachment of alanine to tRNA(Ala) in a two-step reaction: alanine is first activated by ATP to form Ala-AMP and then transferred to the acceptor end of tRNA(Ala). Also edits incorrectly charged Ser-tRNA(Ala) and Gly-tRNA(Ala) via its editing domain. The protein is Alanine--tRNA ligase of Endomicrobium trichonymphae.